Reading from the N-terminus, the 160-residue chain is Cytochrome b6-f complex subunit 4 (160 aa).

3 helical membrane-spanning segments follow: residues 36 to 56 (LLYI…GLSV), 95 to 115 (LLGV…PFIE), and 131 to 151 (TVFL…ALPI).

The protein belongs to the cytochrome b family. PetD subfamily. In terms of assembly, the 4 large subunits of the cytochrome b6-f complex are cytochrome b6, subunit IV (17 kDa polypeptide, petD), cytochrome f and the Rieske protein, while the 4 small subunits are petG, petL, petM and petN. The complex functions as a dimer.

It localises to the plastid. Its subcellular location is the chloroplast thylakoid membrane. Component of the cytochrome b6-f complex, which mediates electron transfer between photosystem II (PSII) and photosystem I (PSI), cyclic electron flow around PSI, and state transitions. This Chlorella vulgaris (Green alga) protein is Cytochrome b6-f complex subunit 4.